The chain runs to 278 residues: Elongation factor Ts (278 aa).

The tract at residues 79-82 (TDFV) is involved in Mg(2+) ion dislocation from EF-Tu.

The protein belongs to the EF-Ts family.

The protein resides in the cytoplasm. Associates with the EF-Tu.GDP complex and induces the exchange of GDP to GTP. It remains bound to the aminoacyl-tRNA.EF-Tu.GTP complex up to the GTP hydrolysis stage on the ribosome. In Borrelia duttonii (strain Ly), this protein is Elongation factor Ts.